A 270-amino-acid chain; its full sequence is Indole-3-glycerol phosphate synthase (270 aa).

Belongs to the TrpC family.

It carries out the reaction 1-(2-carboxyphenylamino)-1-deoxy-D-ribulose 5-phosphate + H(+) = (1S,2R)-1-C-(indol-3-yl)glycerol 3-phosphate + CO2 + H2O. Its pathway is amino-acid biosynthesis; L-tryptophan biosynthesis; L-tryptophan from chorismate: step 4/5. This Salinibacter ruber (strain DSM 13855 / M31) protein is Indole-3-glycerol phosphate synthase.